The chain runs to 1238 residues: ATP-dependent helicase/nuclease subunit A (1238 aa).

The UvrD-like helicase ATP-binding domain occupies 12–490 (VSWTDDQWKA…IDLNANFRSR (479 aa)). 33–40 (AAAGSGKT) serves as a coordination point for ATP. The region spanning 510 to 818 (GEILYDDNAS…RLVTIHSSKG (309 aa)) is the UvrD-like helicase C-terminal domain.

It belongs to the helicase family. AddA subfamily. As to quaternary structure, heterodimer of AddA and AddB/RexB. Requires Mg(2+) as cofactor.

It carries out the reaction Couples ATP hydrolysis with the unwinding of duplex DNA by translocating in the 3'-5' direction.. It catalyses the reaction ATP + H2O = ADP + phosphate + H(+). In terms of biological role, the heterodimer acts as both an ATP-dependent DNA helicase and an ATP-dependent, dual-direction single-stranded exonuclease. Recognizes the chi site generating a DNA molecule suitable for the initiation of homologous recombination. The AddA nuclease domain is required for chi fragment generation; this subunit has the helicase and 3' -&gt; 5' nuclease activities. The polypeptide is ATP-dependent helicase/nuclease subunit A (Lysinibacillus sphaericus (strain C3-41)).